The primary structure comprises 245 residues: E3 ubiquitin-protein ligase RNF138 (245 aa).

A2 bears the N-acetylalanine mark. The segment at 18 to 58 (CPVCQEVLKTPVRTAACQHVFCRKCFLTAMRESGIHCPLCR) adopts an RING-type zinc-finger fold. The Zn(2+) site is built by C86, C89, H101, and C105. The segment at 86–105 (CRCCAKQIKFYRMRHHYKSC) adopts a C2HC RNF-type zinc-finger fold. A disordered region spans residues 128–153 (VGNSNRSETSASDNIETYQENTGSSG). 2 C2H2-type zinc fingers span residues 157–180 (FKCP…NSNH) and 187–215 (VTCP…NQRH). The UIM domain occupies 225–243 (LQLDEETQYQTAVEESFQV).

Interacts with NLK. Interacts with XRCC5/Ku80. Interacts with RBBP8/CtIP. Post-translationally, auto-ubiquitinated.

The protein resides in the chromosome. The catalysed reaction is S-ubiquitinyl-[E2 ubiquitin-conjugating enzyme]-L-cysteine + [acceptor protein]-L-lysine = [E2 ubiquitin-conjugating enzyme]-L-cysteine + N(6)-ubiquitinyl-[acceptor protein]-L-lysine.. It functions in the pathway protein modification; protein ubiquitination. Functionally, E3 ubiquitin-protein ligase involved in DNA damage response by promoting DNA resection and homologous recombination. Recruited to sites of double-strand breaks following DNA damage and specifically promotes double-strand break repair via homologous recombination. Two different, non-exclusive, mechanisms have been proposed. According to a report, regulates the choice of double-strand break repair by favoring homologous recombination over non-homologous end joining (NHEJ): acts by mediating ubiquitination of XRCC5/Ku80, leading to remove the Ku complex from DNA breaks, thereby promoting homologous recombination. According to another report, cooperates with UBE2Ds E2 ubiquitin ligases (UBE2D1, UBE2D2, UBE2D3 or UBE2D4) to promote homologous recombination by mediating ubiquitination of RBBP8/CtIP. Together with NLK, involved in the ubiquitination and degradation of TCF/LEF. Also exhibits auto-ubiquitination activity in combination with UBE2K. May act as a negative regulator in the Wnt/beta-catenin-mediated signaling pathway. This is E3 ubiquitin-protein ligase RNF138 (RNF138) from Bos taurus (Bovine).